A 148-amino-acid chain; its full sequence is MQLILLEKVANLGNLGDKVNVKAGYGRNYLLPYGKATAATAANLAAFEERRAELEKAAADKKASAETRAAQLAELEVTITATAGDEGKLFGSIGTHDIADALTASGVEVQKSEVRLPNGTIRNVGEFDVAVHLHAEVEATVRVVVVAA.

The protein belongs to the bacterial ribosomal protein bL9 family.

Binds to the 23S rRNA. In Pseudomonas fluorescens (strain SBW25), this protein is Large ribosomal subunit protein bL9.